Reading from the N-terminus, the 309-residue chain is HPr kinase/phosphorylase (309 aa).

Residues histidine 138 and lysine 159 contribute to the active site. 153–160 (GKSGIGKS) is an ATP binding site. Serine 160 serves as a coordination point for Mg(2+). Aspartate 177 serves as the catalytic Proton acceptor; for phosphorylation activity. Proton donor; for dephosphorylation activity. An important for the catalytic mechanism of both phosphorylation and dephosphorylation region spans residues 201 to 210 (IEVRGIGILD). Glutamate 202 is a binding site for Mg(2+). Arginine 243 is an active-site residue. Residues 264-269 (PIKPAR) are important for the catalytic mechanism of dephosphorylation.

This sequence belongs to the HPrK/P family. As to quaternary structure, homohexamer. Mg(2+) serves as cofactor.

It carries out the reaction [HPr protein]-L-serine + ATP = [HPr protein]-O-phospho-L-serine + ADP + H(+). The enzyme catalyses [HPr protein]-O-phospho-L-serine + phosphate + H(+) = [HPr protein]-L-serine + diphosphate. Catalyzes the ATP- as well as the pyrophosphate-dependent phosphorylation of a specific serine residue in HPr, a phosphocarrier protein of the phosphoenolpyruvate-dependent sugar phosphotransferase system (PTS). HprK/P also catalyzes the pyrophosphate-producing, inorganic phosphate-dependent dephosphorylation (phosphorolysis) of seryl-phosphorylated HPr (P-Ser-HPr). The two antagonistic activities of HprK/P are regulated by several intracellular metabolites, which change their concentration in response to the absence or presence of rapidly metabolisable carbon sources (glucose, fructose, etc.) in the growth medium. Therefore, by controlling the phosphorylation state of HPr, HPrK/P is a sensor enzyme that plays a major role in the regulation of carbon metabolism and sugar transport: it mediates carbon catabolite repression (CCR), and regulates PTS-catalyzed carbohydrate uptake and inducer exclusion. The sequence is that of HPr kinase/phosphorylase from Alkaliphilus metalliredigens (strain QYMF).